Reading from the N-terminus, the 123-residue chain is Small ribosomal subunit protein uS12c (123 aa).

This sequence belongs to the universal ribosomal protein uS12 family. Part of the 30S ribosomal subunit.

The protein resides in the plastid. It is found in the chloroplast. Its function is as follows. With S4 and S5 plays an important role in translational accuracy. Located at the interface of the 30S and 50S subunits. The chain is Small ribosomal subunit protein uS12c (rps12) from Physcomitrium patens (Spreading-leaved earth moss).